The sequence spans 191 residues: Calcium and integrin-binding protein 1 (191 aa).

Gly-2 carries the N-myristoyl glycine lipid modification. 2 EF-hand domains span residues 103–138 (TPDI…LTGE) and 148–183 (EMKQ…SPDF). Ca(2+) contacts are provided by Asp-116, Asp-118, Asp-120, Thr-122, Asp-127, Asp-161, Asp-163, Asp-165, Thr-167, and Glu-172.

In terms of assembly, monomer. Interacts with the heterodimeric integrin alpha-IIb/beta3 (ITGA2B-ITGB3). Interacts with ITGA2B (via cytoplasmic domain); the interaction is direct and calcium-dependent. Interacts with the protein kinases PLK2/SNK and PRKDC (via the region immediately upstream of the kinase domain). Interacts with PLK3; the interaction inhibits PLK3 kinase activity. Interacts with PSEN2. Interacts (via C-terminus) with F8. Interacts with NBR1 (via C-terminus). Interacts with FEZ1 (via C-terminus). Interacts with UBR5 (via C-terminus); the interaction is sensitive to DNA damage, and may target CIB1 for ubiquitin-mediated degradation. Interacts with IFI6; the interaction is direct. Interacts with BCL2. Interacts with TAS1R2 (via C-terminus); the interaction is independent of the myristoylation state of CIB1. Interacts with ITPR3; the interaction occurs in a calcium dependent manner. Interacts with PTK2/FAK1. Interacts with MAP3K5; the interaction inhibits MAP3K5 activation by phosphorylation, and its subsequent interaction with TRAF2. Interacts (via C-terminal region) with STMN2 (via the N-terminal region); the interaction is direct, occurs in a calcium-dependent manner and attenuates the STMN2-induced neurite outgrowth inhibition. Interacts with SPHK1, the interaction occurs in a calcium-dependent manner. Interacts with ITGA2B (via C-terminal cytoplasmic tail); the interaction occurs upon platelet aggregation and is stabilized/increased in a calcium and magnesium-dependent manner. Interacts with PAK1 (via N-terminal region); the interaction is direct and occurs in a calcium-dependent manner. Interacts with RAC3 (via C-terminal region); the interaction induces their association with the cytoskeleton upon alpha-IIb/beta3 integrin-mediated adhesion. Interacts with ITGA5 and ITGAV. Interacts with MYO1C. Interacts with ITGA2B (via C-terminal cytoplasmic tail region). Interacts (via C-terminal region) with PPP3R1 isoform 1 and isoform 2; the interactions increase upon cardiomyocytes hypertrophy. Interacts with CACNA1C; the interaction increases upon cardiomyocytes hypertrophy. Interacts and forms a complex with TMC6 and TMC8; the interaction stabilizes each component of the complex. As to expression, expressed strongly in Sertoli cells, weakly in pachytene spermatocytes, round spermatids and condensing spermatids (at protein level). Expressed in testis. Expressed in cardiac myocytes and endothelial cells. Expressed in heart, liver, spleen, lung, kidney, brain and inner ear. In the inner ear, expressed in the vestibule, basilar membrane and spiral ganglion cells.

The protein resides in the membrane. Its subcellular location is the cell membrane. It is found in the sarcolemma. The protein localises to the apical cell membrane. It localises to the cell projection. The protein resides in the ruffle membrane. Its subcellular location is the filopodium tip. It is found in the growth cone. The protein localises to the lamellipodium. It localises to the cytoplasm. The protein resides in the cytoskeleton. Its subcellular location is the microtubule organizing center. It is found in the centrosome. The protein localises to the perinuclear region. It localises to the nucleus. The protein resides in the neuron projection. Its subcellular location is the perikaryon. In terms of biological role, calcium-binding protein that plays a role in the regulation of numerous cellular processes, such as cell differentiation, cell division, cell proliferation, cell migration, thrombosis, angiogenesis, cardiac hypertrophy and apoptosis. Involved in bone marrow megakaryocyte differentiation by negatively regulating thrombopoietin-mediated signaling pathway. Participates in the endomitotic cell cycle of megakaryocyte, a form of mitosis in which both karyokinesis and cytokinesis are interrupted. Plays a role in integrin signaling by negatively regulating alpha-IIb/beta3 activation in thrombin-stimulated megakaryocytes preventing platelet aggregation. Up-regulates PTK2/FAK1 activity, and is also needed for the recruitment of PTK2/FAK1 to focal adhesions; it thus appears to play an important role in focal adhesion formation. Positively regulates cell migration on fibronectin in a CDC42-dependent manner, the effect being negatively regulated by PAK1. Functions as a negative regulator of stress activated MAP kinase (MAPK) signaling pathways. Down-regulates inositol 1,4,5-trisphosphate receptor-dependent calcium signaling. Involved in sphingosine kinase SPHK1 translocation to the plasma membrane in a N-myristoylation-dependent manner preventing TNF-alpha-induced apoptosis. Regulates serine/threonine-protein kinase PLK3 activity for proper completion of cell division progression. Plays a role in microtubule (MT) dynamics during neuronal development; disrupts the MT depolymerization activity of STMN2 attenuating NGF-induced neurite outgrowth and the MT reorganization at the edge of lamellipodia. Promotes cardiomyocyte hypertrophy via activation of the calcineurin/NFAT signaling pathway. Stimulates calcineurin PPP3R1 activity by mediating its anchoring to the sarcolemma. In ischemia-induced (pathological or adaptive) angiogenesis, stimulates endothelial cell proliferation, migration and microvessel formation by activating the PAK1 and ERK1/ERK2 signaling pathway. Also promotes cancer cell survival and proliferation. May regulate cell cycle and differentiation of spermatogenic germ cells, and/or differentiation of supporting Sertoli cells. Forms a complex with TMC6/EVER1 and TMC8/EVER2 in lymphocytes and keratynocytes where CIB1 stabilizes TMC6 and TMC8 levels and reciprocally. This Mus musculus (Mouse) protein is Calcium and integrin-binding protein 1 (Cib1).